Here is a 540-residue protein sequence, read N- to C-terminus: Cytochrome P450 monooxygenase ptmG (540 aa).

N-linked (GlcNAc...) asparagine glycosylation occurs at asparagine 17. 2 helical membrane passes run 20–40 (VMTL…YICI) and 325–345 (AAFL…FLLL). Cysteine 474 contributes to the heme binding site.

Belongs to the cytochrome P450 family. It depends on heme as a cofactor.

The protein localises to the membrane. It participates in secondary metabolite biosynthesis. Its function is as follows. Cytochrome P450 monooxygenase; part of the gene cluster that mediates the biosynthesis of the indole diterpenes penitrems. The geranylgeranyl diphosphate (GGPP) synthase ptmG catalyzes the first step in penitrem biosynthesis via conversion of farnesyl pyrophosphate and isopentyl pyrophosphate into geranylgeranyl pyrophosphate (GGPP). Condensation of indole-3-glycerol phosphate with GGPP by the prenyl transferase ptmC then forms 3-geranylgeranylindole (3-GGI). Epoxidation by the FAD-dependent monooxygenase ptmM leads to a epoxidized-GGI that is substrate of the terpene cyclase ptmB for cyclization to yield paspaline. Paspaline is subsequently converted to 13-desoxypaxilline by the cytochrome P450 monooxygenase ptmP, the latter being then converted to paxilline by the cytochrome P450 monooxygenase ptmQ. Paxilline is converted to beta-paxitriol via C-10 ketoreduction by the short-chain dehydrogenase ptmH which can be monoprenylated at the C-20 by the indole diterpene prenyltransferase ptmD. A two-step elimination (acetylation and elimination) process performed by the O-acetyltransferase ptmV and ptmI leads to the production of the prenylated form of penijanthine. The FAD-linked oxidoreductase ptmO then converts the prenylated form of penijanthine into PC-M5 which is in turn transformed into PC-M4 by the aromatic dimethylallyltransferase ptmE. Five sequential oxidative transformations performed by the cytochrome P450 monooxygenases ptmK, ptmU, ptmL, ptmN and ptmJ yield the various penitrem compounds. PtmK, ptmU and ptmM are involved in the formation of the key bicyclic ring of penitrem C via the formation of the intermediates secopenitrem D and penitrem D. PtmL catalyzes the epoxidation of penitrem D and C to yield penitrem B and F, respectively. PtmJ catalyzes the last benzylic hydroxylation to convert penitrem B to prenitrem E and penitrem F to penitrem A. This chain is Cytochrome P450 monooxygenase ptmG, found in Penicillium ochrochloron.